The primary structure comprises 479 residues: Poly(A) polymerase catalytic subunit (479 aa).

Active-site residues include Asp-202 and Asp-204. Residues Asp-202, Asp-204, and Asp-253 each contribute to the Ca(2+) site.

Belongs to the poxviridae poly(A) polymerase catalytic subunit family. In terms of assembly, heterodimer of a large (catalytic) subunit and a small (regulatory) subunit.

It catalyses the reaction RNA(n) + ATP = RNA(n)-3'-adenine ribonucleotide + diphosphate. Functionally, polymerase that creates the 3'-poly(A) tail of mRNA's. The sequence is that of Poly(A) polymerase catalytic subunit (OPG063) from Homo sapiens (Human).